The following is an 85-amino-acid chain: ATP synthase subunit c (85 aa).

A run of 2 helical transmembrane segments spans residues 10-30 (IAVGIIVGLASLGTAIGFAIL) and 53-73 (FIIAGLLDAVPMIGIVIALLF).

The protein belongs to the ATPase C chain family. As to quaternary structure, F-type ATPases have 2 components, F(1) - the catalytic core - and F(0) - the membrane proton channel. F(1) has five subunits: alpha(3), beta(3), gamma(1), delta(1), epsilon(1). F(0) has three main subunits: a(1), b(2) and c(10-14). The alpha and beta chains form an alternating ring which encloses part of the gamma chain. F(1) is attached to F(0) by a central stalk formed by the gamma and epsilon chains, while a peripheral stalk is formed by the delta and b chains.

It localises to the cell inner membrane. Its function is as follows. F(1)F(0) ATP synthase produces ATP from ADP in the presence of a proton or sodium gradient. F-type ATPases consist of two structural domains, F(1) containing the extramembraneous catalytic core and F(0) containing the membrane proton channel, linked together by a central stalk and a peripheral stalk. During catalysis, ATP synthesis in the catalytic domain of F(1) is coupled via a rotary mechanism of the central stalk subunits to proton translocation. Functionally, key component of the F(0) channel; it plays a direct role in translocation across the membrane. A homomeric c-ring of between 10-14 subunits forms the central stalk rotor element with the F(1) delta and epsilon subunits. The chain is ATP synthase subunit c from Aliivibrio salmonicida (strain LFI1238) (Vibrio salmonicida (strain LFI1238)).